The chain runs to 332 residues: Fructose-1,6-bisphosphatase class 1 (332 aa).

Mg(2+) is bound by residues Glu-94, Asp-116, Leu-118, and Asp-119. Residues 119-122 (DGSS), Asn-211, Tyr-239, 257-259 (YLY), and Lys-269 each bind substrate. Mg(2+) is bound at residue Glu-275.

This sequence belongs to the FBPase class 1 family. Homotetramer. Mg(2+) serves as cofactor.

The protein localises to the cytoplasm. The enzyme catalyses beta-D-fructose 1,6-bisphosphate + H2O = beta-D-fructose 6-phosphate + phosphate. The protein operates within carbohydrate biosynthesis; Calvin cycle. In Synechococcus sp. (strain JA-3-3Ab) (Cyanobacteria bacterium Yellowstone A-Prime), this protein is Fructose-1,6-bisphosphatase class 1.